Here is a 338-residue protein sequence, read N- to C-terminus: D-alanine--D-alanine ligase (338 aa).

One can recognise an ATP-grasp domain in the interval 120 to 324 (KRVMLAEGLP…YEDLCIEVLK (205 aa)). 150–205 (PDKLGLPLIVKPAREGSSIGLTKVTERAGMADAVAQAEKLDADILCEQFISGDEVT) provides a ligand contact to ATP. 3 residues coordinate Mg(2+): Asp-277, Glu-291, and Asn-293.

The protein belongs to the D-alanine--D-alanine ligase family. It depends on Mg(2+) as a cofactor. Requires Mn(2+) as cofactor.

It is found in the cytoplasm. It carries out the reaction 2 D-alanine + ATP = D-alanyl-D-alanine + ADP + phosphate + H(+). Its pathway is cell wall biogenesis; peptidoglycan biosynthesis. Cell wall formation. The protein is D-alanine--D-alanine ligase of Polaromonas sp. (strain JS666 / ATCC BAA-500).